Reading from the N-terminus, the 118-residue chain is MIKGIGLDMIDLERVKQVVEKNPRFIERVLTEKEIKQFEKYEGNRKIEFLAGRFAAKEAYAKANGTGFGKHLSFTDVEILQVEDGRPHVTLPANAGENVFVSITHTARSAAAQVIIEI.

Mg(2+) contacts are provided by D8 and E58.

It belongs to the P-Pant transferase superfamily. AcpS family. Requires Mg(2+) as cofactor.

The protein localises to the cytoplasm. It catalyses the reaction apo-[ACP] + CoA = holo-[ACP] + adenosine 3',5'-bisphosphate + H(+). Functionally, transfers the 4'-phosphopantetheine moiety from coenzyme A to a Ser of acyl-carrier-protein. The sequence is that of Holo-[acyl-carrier-protein] synthase from Listeria monocytogenes serotype 4a (strain HCC23).